We begin with the raw amino-acid sequence, 778 residues long: Probable dipeptidyl peptidase 4 (778 aa).

The first 18 residues, 1–18, serve as a signal peptide directing secretion; it reads MKTSQFLSLLLLAGIAQA. N-linked (GlcNAc...) asparagine glycans are attached at residues Asn-84, Asn-114, and Asn-222. Active-site charge relay system residues include Ser-616, Asp-693, and His-728.

Belongs to the peptidase S9B family.

Its subcellular location is the secreted. It carries out the reaction Release of an N-terminal dipeptide, Xaa-Yaa-|-Zaa-, from a polypeptide, preferentially when Yaa is Pro, provided Zaa is neither Pro nor hydroxyproline.. In terms of biological role, extracellular dipeptidyl-peptidase which removes N-terminal dipeptides sequentially from polypeptides having unsubstituted N-termini provided that the penultimate residue is proline. Contributes to pathogenicity. The sequence is that of Probable dipeptidyl peptidase 4 (DPP4) from Arthroderma benhamiae (strain ATCC MYA-4681 / CBS 112371) (Trichophyton mentagrophytes).